Consider the following 609-residue polypeptide: Dihydroxy-acid dehydratase (609 aa).

Asp-81 serves as a coordination point for Mg(2+). Cys-122 is a binding site for [2Fe-2S] cluster. Mg(2+)-binding residues include Asp-123 and Lys-124. The residue at position 124 (Lys-124) is an N6-carboxylysine. Cys-195 provides a ligand contact to [2Fe-2S] cluster. Residue Glu-491 participates in Mg(2+) binding. The Proton acceptor role is filled by Ser-517.

This sequence belongs to the IlvD/Edd family. Homodimer. It depends on [2Fe-2S] cluster as a cofactor. Mg(2+) serves as cofactor.

It catalyses the reaction (2R)-2,3-dihydroxy-3-methylbutanoate = 3-methyl-2-oxobutanoate + H2O. The enzyme catalyses (2R,3R)-2,3-dihydroxy-3-methylpentanoate = (S)-3-methyl-2-oxopentanoate + H2O. The protein operates within amino-acid biosynthesis; L-isoleucine biosynthesis; L-isoleucine from 2-oxobutanoate: step 3/4. Its pathway is amino-acid biosynthesis; L-valine biosynthesis; L-valine from pyruvate: step 3/4. Its function is as follows. Functions in the biosynthesis of branched-chain amino acids. Catalyzes the dehydration of (2R,3R)-2,3-dihydroxy-3-methylpentanoate (2,3-dihydroxy-3-methylvalerate) into 2-oxo-3-methylpentanoate (2-oxo-3-methylvalerate) and of (2R)-2,3-dihydroxy-3-methylbutanoate (2,3-dihydroxyisovalerate) into 2-oxo-3-methylbutanoate (2-oxoisovalerate), the penultimate precursor to L-isoleucine and L-valine, respectively. This is Dihydroxy-acid dehydratase from Acinetobacter baumannii (strain AB0057).